The primary structure comprises 511 residues: 2-isopropylmalate synthase (511 aa).

A Pyruvate carboxyltransferase domain is found at 6-269 (IIIFDTTLRD…YTDIKCENIS (264 aa)). Mn(2+) is bound by residues Asp-15, His-203, His-205, and Asn-239. A regulatory domain region spans residues 394-511 (VLEKLSVISG…SLKVEERKMA (118 aa)).

This sequence belongs to the alpha-IPM synthase/homocitrate synthase family. LeuA type 1 subfamily. Homodimer. The cofactor is Mn(2+).

The protein localises to the cytoplasm. The enzyme catalyses 3-methyl-2-oxobutanoate + acetyl-CoA + H2O = (2S)-2-isopropylmalate + CoA + H(+). The protein operates within amino-acid biosynthesis; L-leucine biosynthesis; L-leucine from 3-methyl-2-oxobutanoate: step 1/4. Its function is as follows. Catalyzes the condensation of the acetyl group of acetyl-CoA with 3-methyl-2-oxobutanoate (2-ketoisovalerate) to form 3-carboxy-3-hydroxy-4-methylpentanoate (2-isopropylmalate). The protein is 2-isopropylmalate synthase of Campylobacter jejuni subsp. doylei (strain ATCC BAA-1458 / RM4099 / 269.97).